The chain runs to 338 residues: Starch-binding domain-containing protein 1 (338 aa).

Residues 1 to 6 (MGAVWS) lie on the Extracellular side of the membrane. Residues 7 to 23 (ALLVGGGLAGALILWLL) form a helical membrane-spanning segment. Residues 24–338 (RGDSGAPGKD…KVVHGWWGIH (315 aa)) are Cytoplasmic-facing. 2 disordered regions span residues 30–73 (PGKD…RELV) and 120–148 (KIPD…WRLP). Residues 36 to 52 (AEPPQKGAPPGEAAAPG) show a composition bias toward low complexity. The span at 53-62 (DGPGGGGSGG) shows a compositional bias: gly residues. At S68 the chain carries Phosphoserine. Residues 122–132 (PDTHSRADSEA) show a composition bias toward basic and acidic residues. Phosphoserine occurs at positions 140, 167, and 179. Residues 185-191 (HEDWEVV) carry the LIR motif. S195, S196, S205, S209, S212, S220, and S223 each carry phosphoserine. Positions 238–337 (SLKPQQVSIQ…DKVVHGWWGI (100 aa)) constitute a CBM20 domain.

Interacts with the ATG8 family proteins GABARAP and GABARAPL1. Interacts with several glycogen-associated proteins, such as GYS2 (liver glycogen synthase), GDE (glycogen debranching enzyme), GBE1 (glycogen branching enzyme 1) and EPM2A (Laforin). In terms of processing, ubiquitinated, which leads to proteasomal degradation. Expressed at high level in glycogen-accumulating organs such as muscle and liver. Trace signals are also found in brain, kidney, and pancreas.

It localises to the preautophagosomal structure membrane. The protein localises to the endoplasmic reticulum membrane. The protein resides in the cell membrane. It is found in the sarcolemma. Its subcellular location is the T-tubule. Acts as a cargo receptor for glycogen. Delivers its cargo to an autophagic pathway called glycophagy, resulting in the transport of glycogen to lysosomes. The protein is Starch-binding domain-containing protein 1 of Mus musculus (Mouse).